Consider the following 364-residue polypeptide: Peptide chain release factor 1 (364 aa).

At glutamine 230 the chain carries N5-methylglutamine.

This sequence belongs to the prokaryotic/mitochondrial release factor family. In terms of processing, methylated by PrmC. Methylation increases the termination efficiency of RF1.

It localises to the cytoplasm. In terms of biological role, peptide chain release factor 1 directs the termination of translation in response to the peptide chain termination codons UAG and UAA. This Acidothermus cellulolyticus (strain ATCC 43068 / DSM 8971 / 11B) protein is Peptide chain release factor 1.